The primary structure comprises 703 residues: Probable boron transporter 2 (703 aa).

At 1–35 (MEETFVPFEGIKNDLKGRLMCYKQDWTGGIKAGFR) the chain is on the cytoplasmic side. A helical membrane pass occupies residues 36 to 56 (ILAPTTYIFFASAIPVISFGE). Residues 57 to 75 (QLERSTDGVLTAVQTLAST) lie on the Extracellular side of the membrane. Residues 76–96 (AICGIIHSIIGGQPLLILGVA) traverse the membrane as a helical segment. The Cytoplasmic segment spans residues 97 to 120 (EPTVIMYTFMFNFAKGRPELGRNL). The chain crosses the membrane as a helical span at residues 121–141 (FLAWSGWVCVWTSLILFVLAI). Residues 142–155 (CGACSFINRFTRVA) are Extracellular-facing. Residues 156–176 (GELFGLLIAMLFMQQAIKGLV) form a helical membrane-spanning segment. Topologically, residues 177 to 195 (DEFRAPAREDLKLVEFLPS) are cytoplasmic. The chain crosses the membrane as a helical span at residues 196–216 (WRFANGMFALVLSFGLLITAL). Topologically, residues 217–233 (RSRKARSWRYGTGWLRS) are extracellular. A helical membrane pass occupies residues 234–254 (LVADYGVPLMVLVWTGVSYIP). The Cytoplasmic segment spans residues 255 to 289 (TGDVPKGIPRRLFSPNPWSPGAYENWTVVKEMLQV). The helical transmembrane segment at 290 to 310 (PIVYIIGAFIPATMIAVLYYF) threads the bilayer. Topologically, residues 311 to 337 (DHSVASQLAQQKEFNLRKPSSYHYDLL) are extracellular. Residues 338 to 358 (LLGFLTLMCGLLGIPPSNGVI) form a helical membrane-spanning segment. Residues 359–480 (PQSPMHTKSL…AVMVGGCVAA (122 aa)) are Cytoplasmic-facing. The chain crosses the membrane as a helical span at residues 481–501 (MPLLKMIPTSVLWGYFAFMAI). Residues 502–557 (ESLPGNQFWERILLLFTAPSRRFKVLEDNHATFVETVPFKTIAMFTIFQTTYLLTC) are Extracellular-facing. A helical membrane pass occupies residues 558-578 (FGLTWIPIAGVMFPLLIMFLI). Topologically, residues 579–703 (PVRQYILPRF…SPLNPSSSSK (125 aa)) are cytoplasmic. Positions 678–703 (EMSPRLSGKGQNSPKPSPLNPSSSSK) are disordered.

Belongs to the anion exchanger (TC 2.A.31.3) family.

The protein localises to the membrane. In terms of biological role, probable boron transporter. Boron is essential for maintaining the integrity of plants cell walls. In Arabidopsis thaliana (Mouse-ear cress), this protein is Probable boron transporter 2 (BOR2).